We begin with the raw amino-acid sequence, 294 residues long: MKMMVVVVVMMLSWLILKPPSTWAINTITFDVGNATINKYATFMKSIHNQAKDPTLKCYGIPMLPNTNLTPKYLLVTLQDSSLKTITLMLKRNNLYVMGYADTYNGKCRYHIFKDISNTTERNDVMTTLCPNPSSRVGKNINYDSSYPALEKKVGRPRSQVQLGIQILNSGIGKIYGVDSFTEKTEAEFLLVAIQMVSEAARFKYIENQVKTNFNRAFYPNAKVLNLEESWGKISTAIHNAKNGALTSPLELKNANGSKWIVLRVDDIEPDVGLLKYVNGTCQATYQSAMFPHL.

An N-terminal signal peptide occupies residues 1-24 (MKMMVVVVVMMLSWLILKPPSTWA). Disulfide bonds link Cys58/Cys282 and Cys108/Cys130. Glu199 is an active-site residue. A propeptide spanning residues 286 to 294 (YQSAMFPHL) is cleaved from the precursor.

It belongs to the ribosome-inactivating protein family. Type 1 RIP subfamily. In terms of assembly, monomer.

The protein resides in the secreted. It localises to the cell wall. The catalysed reaction is Endohydrolysis of the N-glycosidic bond at one specific adenosine on the 28S rRNA.. In terms of biological role, inhibits viral infection of plants, and protein synthesis in vitro. Has also been shown to inhibit the replication of mammalian viruses. The protein may provide a means of cellular suicide upon invasion by a virus. This chain is Antiviral protein alpha, found in Phytolacca americana (American pokeweed).